A 259-amino-acid chain; its full sequence is ATP synthase subunit a (259 aa).

Positions 1-7 (MTNNYIN) are cleaved as a propeptide — removed in mature form. The next 5 helical transmembrane spans lie at 36-56 (FSLYTLFVVLVISLTFILSIG), 95-115 (YVPLVYTLFTFILVANLIGMV), 125-145 (LIYIIGISVSLWIGLTILGLF), 164-206 (LVPV…NLVK), and 211-253 (INYF…SYLK).

In terms of assembly, F-type ATP synthases have 2 components, the catalytic core F(1) and the membrane-embedded component F(0), linked together by a central stalk and a peripheral stalk. The central stalk, also called rotor shaft, is often seen as part of F(1). The peripheral stalk is seen as part of F(0). F(0) contains the membrane channel next to the rotor. F-type ATP synthases form dimers but each monomer functions independently in ATP generation. The dimer consists of 18 different polypeptides: ATP1 (subunit alpha, part of F(1), 3 molecules per monomer), ATP2 (subunit beta, part of F(1), 3 molecules per monomer), ATP3 (subunit gamma, part of the central stalk), ATP4 (subunit b, part of the peripheral stalk), ATP5/OSCP (subunit 5/OSCP, part of the peripheral stalk), ATP6 (subunit a, part of the peripheral stalk), ATP7 (subunit d, part of the peripheral stalk), ATP8 (subunit 8, part of the peripheral stalk), OLI1 (subunit c, part of the rotor, 10 molecules per monomer), ATP14 (subunit h, part of the peripheral stalk), ATP15 (subunit epsilon, part of the central stalk), ATP16 (subunit delta, part of the central stalk), ATP17 (subunit f, part of the peripheral stalk), ATP18 (subunit i/j, part of the peripheral stalk). Dimer-specific subunits are ATP19 (subunit k, at interface between monomers), ATP20 (subunit g, at interface between monomers), TIM11 (subunit e, at interface between monomers). Also contains subunit L.

The protein resides in the mitochondrion inner membrane. In terms of biological role, mitochondrial membrane ATP synthase (F(1)F(0) ATP synthase or Complex V) produces ATP from ADP in the presence of a proton gradient across the membrane which is generated by electron transport complexes of the respiratory chain. F-type ATP synthases consist of two structural domains, F(1) - containing the extramembraneous catalytic core, and F(0) - containing the membrane proton channel, linked together by a central stalk and a peripheral stalk. During catalysis, ATP synthesis in the catalytic domain of F(1) is coupled via a rotary mechanism of the central stalk subunits to proton translocation. Key component of the proton channel; it may play a direct role in the translocation of protons across the membrane. The polypeptide is ATP synthase subunit a (Pichia angusta (Yeast)).